The sequence spans 325 residues: Cytosolic Fe-S cluster assembly factor Nubp1 homolog (325 aa).

The interval 1-26 is disordered; that stretch reads MSSGADVPSDAPAHCPGTQSDDAGKA. [4Fe-4S] cluster is bound by residues C15, C29, C32, and C38. ATP is bound at residue 68-75; that stretch reads GKGGVGKS. [4Fe-4S] cluster-binding residues include C243 and C246.

Belongs to the Mrp/NBP35 ATP-binding proteins family. NUBP1/NBP35 subfamily. Heterotetramer of 2 Nubp1 and 2 Nubp2 chains. Requires [4Fe-4S] cluster as cofactor.

Its subcellular location is the cytoplasm. In terms of biological role, component of the cytosolic iron-sulfur (Fe/S) protein assembly (CIA) machinery. Required for maturation of extramitochondrial Fe-S proteins. The Nubp1-Nubp2 heterotetramer forms a Fe-S scaffold complex, mediating the de novo assembly of an Fe-S cluster and its transfer to target apoproteins. The polypeptide is Cytosolic Fe-S cluster assembly factor Nubp1 homolog (Anopheles gambiae (African malaria mosquito)).